A 353-amino-acid polypeptide reads, in one-letter code: Photosystem II D2 protein (353 aa).

Residue threonine 2 is modified to N-acetylthreonine. Threonine 2 is modified (phosphothreonine). Residues 41–61 traverse the membrane as a helical segment; sequence CAYFAIGGWFTGTTFVTSWYT. Histidine 118 contributes to the chlorophyll a binding site. A helical membrane pass occupies residues 125–141; it reads GFMLRQFELARSVQLRP. Residues glutamine 130 and asparagine 143 each contribute to the pheophytin a site. A helical membrane pass occupies residues 153–166; that stretch reads VFVSVFLIYPLGQS. Histidine 198 contributes to the chlorophyll a binding site. The helical transmembrane segment at 208 to 228 threads the bilayer; it reads AALLCAIHGATVENTLFEDGD. Histidine 215 and phenylalanine 262 together coordinate a plastoquinone. Histidine 215 is a binding site for Fe cation. Fe cation is bound at residue histidine 269. The chain crosses the membrane as a helical span at residues 279 to 295; the sequence is GLWMSALGVVGLALNLR.

It belongs to the reaction center PufL/M/PsbA/D family. In terms of assembly, PSII is composed of 1 copy each of membrane proteins PsbA, PsbB, PsbC, PsbD, PsbE, PsbF, PsbH, PsbI, PsbJ, PsbK, PsbL, PsbM, PsbT, PsbX, PsbY, PsbZ, Psb30/Ycf12, at least 3 peripheral proteins of the oxygen-evolving complex and a large number of cofactors. It forms dimeric complexes. It depends on The D1/D2 heterodimer binds P680, chlorophylls that are the primary electron donor of PSII, and subsequent electron acceptors. It shares a non-heme iron and each subunit binds pheophytin, quinone, additional chlorophylls, carotenoids and lipids. There is also a Cl(-1) ion associated with D1 and D2, which is required for oxygen evolution. The PSII complex binds additional chlorophylls, carotenoids and specific lipids. as a cofactor.

The protein resides in the plastid. It localises to the chloroplast thylakoid membrane. It catalyses the reaction 2 a plastoquinone + 4 hnu + 2 H2O = 2 a plastoquinol + O2. Photosystem II (PSII) is a light-driven water:plastoquinone oxidoreductase that uses light energy to abstract electrons from H(2)O, generating O(2) and a proton gradient subsequently used for ATP formation. It consists of a core antenna complex that captures photons, and an electron transfer chain that converts photonic excitation into a charge separation. The D1/D2 (PsbA/PsbD) reaction center heterodimer binds P680, the primary electron donor of PSII as well as several subsequent electron acceptors. D2 is needed for assembly of a stable PSII complex. This Carica papaya (Papaya) protein is Photosystem II D2 protein.